The following is a 309-amino-acid chain: Cutinase (309 aa).

An N-terminal signal peptide occupies residues 1–47 (MSALTSQPTSSGSSEKIPRLRGWRAKAAGVVLAALALTTGVAAPAPA). Ser178 acts as the Nucleophile in catalysis. Residues Asp224 and His256 each act as charge relay system in the active site. Cys289 and Cys305 are oxidised to a cystine.

This sequence belongs to the AB hydrolase superfamily.

The protein resides in the secreted. It carries out the reaction a carboxylic ester + H2O = an alcohol + a carboxylate + H(+). The catalysed reaction is a triacylglycerol + H2O = a diacylglycerol + a fatty acid + H(+). The enzyme catalyses 1,2,3-tri-(9Z-octadecenoyl)-glycerol + H2O = di-(9Z)-octadecenoylglycerol + (9Z)-octadecenoate + H(+). It catalyses the reaction (6-hydroxyhexanoyl)(n) + H2O = (6-hydroxyhexanoyl)(n-1) + 6-hydroxyhexanoate + H(+). It carries out the reaction cutin + H2O = cutin monomers.. Its activity is regulated as follows. No effect on activity by SDS or chelating agents ethylenediaminetetraacetic acid (EDTA) or sodium citrate. No effect on activity by metal ions Ag(+), Ba(2+), Ca(2+), Co(2+), Cu(2+), Mn(2+), Ni(2+), Pb(2+) or Zn(2+). Activated by 1 mM digitonin and sodium deoxycholate, and reducing agents 1 mM 1,4-dithiothreitol, beta-mercaptoethanol and ascorbic acid. Activated by benzene, n-hexane, p-xylene and toluene. Activated by Fe(3+). Inhibited slightly by 1 mM of different chain length fatty acids, and only marginally by 6.0 M urea. Inhibited strongly with chemical modification by reagents phenyl methyl sulfonylfluorid (PMSF), 1-ethyl-3-(3-dimethylaminopropyl) carbodiimide (EDAC), diethylpyrocarbonate (DEPC) and N-bromosuccinimide (NBS). Inhibited by pyridine, DMSO, t-butanol and dodecane. Inhibited by Li(+), Hg(2+) and Mg(2+). No inhibition with chemical modification by reagents N-acetylimidazole (NAI), citraconic anhydride (CA), iodoacetate (IA) and phenylglyoxal (PG). Its function is as follows. Catalyzes the hydrolysis of cutin, a polyester that forms the structure of plant cuticle. Shows esterase activity towards p-nitrophenol-linked aliphatic esters (pNP-aliphatic esters). Has a preference for medium chain length (C-4 to C-12) fatty acid esters. Active with p-nitrophenyl palmitate (p-NPP) as substrate. Hydrolyzes triacylglycerol substrates non-specifically with a preference for long, unsaturated fatty acyl chains with the highest activity for triolein. Substrates with cis-9 unsaturation are preferred over the saturated triacylglycerols. Hydrolyzes a wide range of natural oils, especially olive oil, with relatively high activity. Capable of catalyzing synthesis of the flavor ester isoamyl acetate by esterification of isoamyl alcohol using acetic acid as an acyl donor. Degrades synthetic aliphatic polyesters, namely poly(1,4-butylene succinate) extended with 1,6-diisocyanatohexane (PBSc-D) and poly(epsilon-caprolactone) (PCL) plastics. Does not degrade poly(lactic acid) (PLA) nor aromatic poly(ethylene terephthalate) (PET), the most abundant polyester plastic in the world. In Amycolatopsis mediterranei (strain S699) (Nocardia mediterranei), this protein is Cutinase.